We begin with the raw amino-acid sequence, 342 residues long: Cathepsin B-like cysteine proteinase 2 (342 aa).

A signal peptide spans 1-18 (MKYLVLALCTYLCSQSGA). The propeptide at 19-86 (DENAAQGIPL…VKEDPDPEVD (68 aa)) is activation peptide. Asn-99 is a glycosylation site (N-linked (GlcNAc...) asparagine). Intrachain disulfides connect Cys-100–Cys-128, Cys-111–Cys-156, Cys-147–Cys-214, Cys-148–Cys-152, Cys-185–Cys-218, and Cys-193–Cys-205. Cys-114 is a catalytic residue. N-linked (GlcNAc...) asparagine glycosylation is present at Asn-138. The N-linked (GlcNAc...) asparagine glycan is linked to Asn-198. The active site involves His-285. N-linked (GlcNAc...) asparagine glycosylation is present at Asn-296. Asn-305 is a catalytic residue.

The protein belongs to the peptidase C1 family.

Expression of the protease correlates with blood-feeding and suggests a role for the protease in blood digestion. This is Cathepsin B-like cysteine proteinase 2 (AC-2) from Haemonchus contortus (Barber pole worm).